The following is a 291-amino-acid chain: MTRSYIPLNSLRAFEAAARHLSFTRAAIELNVTHSAISQHVKSLEQQLNCQLFVRGSRGLMLTTEGESLLPVLNDSFDRMAGMLDRFATKQTQEKLKIGVVGTFAIGCLFPLLSDFKRSYPHIDLHISTHNNRVDPAAEGLDYTIRYGGGAWHDTDAQYLCSALMSPLCSPTLASQIQTPADILKFPLLRSYRRDEWALWMQAAGEAPPSPTHNVMVFDSSVTMLEAAQGGMGVAIAPVRMFTHLLSSERIVQPFLTQIDLGSYWITRLQSRPETPAMREFSRWLTGVLHK.

Positions 6-63 constitute an HTH lysR-type domain; that stretch reads IPLNSLRAFEAAARHLSFTRAAIELNVTHSAISQHVKSLEQQLNCQLFVRGSRGLMLT. The H-T-H motif DNA-binding region spans 23–42; sequence FTRAAIELNVTHSAISQHVK.

It belongs to the LysR transcriptional regulatory family.

Its subcellular location is the cytoplasm. In terms of biological role, regulates the expression of the beta-lactamase gene. Represses cephalosporinase (AmpC) in the presence of beta-lactams and induces it in the absence of them. This Citrobacter freundii protein is HTH-type transcriptional activator AmpR (ampR).